The primary structure comprises 157 residues: Crossover junction endodeoxyribonuclease RuvC (157 aa).

Catalysis depends on residues aspartate 7, glutamate 67, and aspartate 140. 3 residues coordinate Mg(2+): aspartate 7, glutamate 67, and aspartate 140.

This sequence belongs to the RuvC family. As to quaternary structure, homodimer which binds Holliday junction (HJ) DNA. The HJ becomes 2-fold symmetrical on binding to RuvC with unstacked arms; it has a different conformation from HJ DNA in complex with RuvA. In the full resolvosome a probable DNA-RuvA(4)-RuvB(12)-RuvC(2) complex forms which resolves the HJ. Requires Mg(2+) as cofactor.

It is found in the cytoplasm. It catalyses the reaction Endonucleolytic cleavage at a junction such as a reciprocal single-stranded crossover between two homologous DNA duplexes (Holliday junction).. The RuvA-RuvB-RuvC complex processes Holliday junction (HJ) DNA during genetic recombination and DNA repair. Endonuclease that resolves HJ intermediates. Cleaves cruciform DNA by making single-stranded nicks across the HJ at symmetrical positions within the homologous arms, yielding a 5'-phosphate and a 3'-hydroxyl group; requires a central core of homology in the junction. The consensus cleavage sequence is 5'-(A/T)TT(C/G)-3'. Cleavage occurs on the 3'-side of the TT dinucleotide at the point of strand exchange. HJ branch migration catalyzed by RuvA-RuvB allows RuvC to scan DNA until it finds its consensus sequence, where it cleaves and resolves the cruciform DNA. The sequence is that of Crossover junction endodeoxyribonuclease RuvC from Rickettsia prowazekii (strain Madrid E).